A 116-amino-acid polypeptide reads, in one-letter code: MKAIIKEDVQASLERYADRPVYIHLETTTGSYSAHLNEKNMTVVAYIRNAKVTYHQAKIKGNGPYRVGLKTEEGWIYAEGLTEYTVDEENRLLMAGHLPGGKLAISLQISEKPFTV.

This is an uncharacterized protein from Bacillus subtilis (strain 168).